The chain runs to 684 residues: Probable metal-nicotianamine transporter YSL9 (684 aa).

Positions 1 to 10 are enriched in basic residues; it reads MKQERRRKRQ. Residues 1-55 are disordered; sequence MKQERRRKRQPGPPRLELVVAHPREEEMAGLDGGGDAEEGATHARGGGGAPPPWR. The next 14 helical transmembrane spans lie at 58–78, 82–102, 130–150, 174–194, 234–254, 295–315, 341–361, 402–422, 430–450, 462–482, 515–535, 568–588, 612–632, and 642–662; these read LTAR…VIVM, LTTG…FVVL, CAVA…LLGL, GIAW…LALV, VNGF…QWFY, LVNL…WPLI, FICV…IVAL, LAFS…PMMF, VVIA…GAGL, IALF…AGLV, IIAQ…TFFL, FSAL…FAVA, VPFL…LIVF, and AALM…LWIF.

This sequence belongs to the YSL (TC 2.A.67.2) family.

The protein resides in the membrane. Its function is as follows. May be involved in the transport of nicotianamine-chelated metals. In Oryza sativa subsp. japonica (Rice), this protein is Probable metal-nicotianamine transporter YSL9 (YSL9).